The following is a 629-amino-acid chain: Polyadenylate-binding protein 2 (629 aa).

Positions 1–12 (MAQVQLQGQTPN) are enriched in polar residues. The disordered stretch occupies residues 1–25 (MAQVQLQGQTPNGSTAAVTSAPATS). Low complexity predominate over residues 13 to 25 (GSTAAVTSAPATS). 4 RRM domains span residues 36 to 114 (TSLY…YSHR), 124 to 201 (GNIF…PFLR), 215 to 292 (TNVY…RAQK), and 318 to 395 (SNLY…IAQR). The tract at residues 480–507 (PQQQRPGGGRRPGGIQHSQQQNPMMQQQ) is disordered. Positions 492-507 (GGIQHSQQQNPMMQQQ) are enriched in low complexity. Positions 539–616 (TIGALASNLS…AMDVLRSVAA (78 aa)) constitute a PABC domain.

Belongs to the polyadenylate-binding protein type-1 family. Interacts with eIF-iso4G. Interacts with ERD15/CID1 and CID7. Interacts with Turnip mosaic virus (TuMV) VPg-Pro and RNA-dependent RNA polymerase (RdRp). As to expression, expressed in all organs (at the protein level) but under distinct spatial and temporal regulation within each organ.

Its subcellular location is the cytoplasm. The protein localises to the nucleus. In terms of biological role, binds the poly(A) tail of mRNA. Appears to be an important mediator of the multiple roles of the poly(A) tail in mRNA biogenesis, stability and translation. In the cytoplasm, affects both translation and mRNA decay. Stimulates translation by interaction with translation initiation factor eIF4G, a subunit of the cap-binding complex eIF4F, bringing the 5'- and 3'-ends of the mRNA in proximity. The formation of this circular mRNP structure appears to be critical for the synergistic effects of the cap and the poly(A) tail in facilitating translation initiation, recycling of ribosomes, and mRNA stability. During infection with potyvirus TuMV, acts as a potential integral component of the viral replicase complex that could play an important role in the regulation of potyviral RNA-dependent RNA polymerase (RdRp). Binds to uridylated mRNAs and determines the size of uridine extensions. Limits uridine extension by URT1, likely by binding to the oligo(A) tail and preventing URT1 access. This Arabidopsis thaliana (Mouse-ear cress) protein is Polyadenylate-binding protein 2 (PAB2).